We begin with the raw amino-acid sequence, 315 residues long: MKVVITGGQGFLGQRLAKTLLAQNNVHIDDLILIDVVKPIAPNNDPRVRCYEMNLRYPTGLDELITEETDAIFHLAAIVSSHAEQDPDLGYETNFLATRNILEICRKNNPKVRFIFSSSLAIFGGELPETILDSTAFTPQSTYGTQKAMCELLINDYSRKGFVDGIVVRLPTICIRPGKPNKAASSFVSSIMREPLHGEDAVCPVSEELRLWLSSPNTVVANFIHALQLPSLPLRSWHTINLPGFSVTVKQMLSDLTQVKGEAILEHIKFEFDESINNIVASWPSRIDNTQALALGFKVDSNFQNVIQQFIEYDM.

3 residues coordinate NAD(+): Ser119, Tyr143, and Lys147. The Proton acceptor role is filled by Tyr143.

The protein belongs to the NAD(P)-dependent epimerase/dehydratase family.

The catalysed reaction is D-erythronate + NAD(+) = 2-dehydro-D-erythronate + NADH + H(+). Its function is as follows. Catalyzes oxidation of D-erythronate to 2-oxo-tetronate. Can use either NAD(+) or NADP(+) as cosubstrate, with a preference for NAD(+). This is D-erythronate dehydrogenase from Haemophilus influenzae (strain ATCC 51907 / DSM 11121 / KW20 / Rd).